Consider the following 421-residue polypeptide: 4-aminobutyrate aminotransferase PuuE (421 aa).

Residues 110–111 and 238–241 contribute to the pyridoxal 5'-phosphate site; these read GA and DEVQ. Lysine 267 bears the N6-(pyridoxal phosphate)lysine mark. Pyridoxal 5'-phosphate is bound at residue threonine 296.

The protein belongs to the class-III pyridoxal-phosphate-dependent aminotransferase family. Requires pyridoxal 5'-phosphate as cofactor.

The catalysed reaction is 4-aminobutanoate + 2-oxoglutarate = succinate semialdehyde + L-glutamate. It functions in the pathway amine and polyamine degradation; putrescine degradation; succinate semialdehyde from 4-aminobutanoate. With respect to regulation, completely inhibited by succinate and low-aeration conditions. In terms of biological role, catalyzes the transfer of the amino group from gamma-aminobutyrate (GABA) to alpha-ketoglutarate (KG) to yield succinic semialdehyde (SSA). PuuE is important for utilization of putrescine as the sole nitrogen or carbon source. The polypeptide is 4-aminobutyrate aminotransferase PuuE (puuE) (Escherichia coli (strain K12)).